The chain runs to 139 residues: Small ribosomal subunit protein uS11 (139 aa).

Positions 118 to 139 (EDVTPIPHDGTRPKGGRRGRRV) are disordered.

It belongs to the universal ribosomal protein uS11 family. In terms of assembly, part of the 30S ribosomal subunit.

Its function is as follows. Located on the platform of the 30S subunit. In Thermococcus sibiricus (strain DSM 12597 / MM 739), this protein is Small ribosomal subunit protein uS11.